Consider the following 317-residue polypeptide: uncharacterized protein (317 aa).

The first 16 residues, 1 to 16 (MKLSFILSTLVAGALA), serve as a signal peptide directing secretion. Asn-42 carries an N-linked (GlcNAc...) asparagine glycan. 2 stretches are compositionally biased toward low complexity: residues 150 to 238 (SSST…SSSS) and 247 to 259 (TAST…ASSA). A disordered region spans residues 150 to 259 (SSSTPSSSSS…TDDSSSASSA (110 aa)).

This is an uncharacterized protein from Schizosaccharomyces pombe (strain 972 / ATCC 24843) (Fission yeast).